Here is a 164-residue protein sequence, read N- to C-terminus: Large ribosomal subunit protein uL10 (164 aa).

It belongs to the universal ribosomal protein uL10 family. In terms of assembly, part of the ribosomal stalk of the 50S ribosomal subunit. The N-terminus interacts with L11 and the large rRNA to form the base of the stalk. The C-terminus forms an elongated spine to which L12 dimers bind in a sequential fashion forming a multimeric L10(L12)X complex.

Forms part of the ribosomal stalk, playing a central role in the interaction of the ribosome with GTP-bound translation factors. The polypeptide is Large ribosomal subunit protein uL10 (rplJ) (Helicobacter pylori (strain ATCC 700392 / 26695) (Campylobacter pylori)).